The sequence spans 106 residues: Nucleoid-associated protein bll8115 (106 aa).

This sequence belongs to the YbaB/EbfC family. As to quaternary structure, homodimer.

Its subcellular location is the cytoplasm. The protein localises to the nucleoid. Binds to DNA and alters its conformation. May be involved in regulation of gene expression, nucleoid organization and DNA protection. The sequence is that of Nucleoid-associated protein bll8115 from Bradyrhizobium diazoefficiens (strain JCM 10833 / BCRC 13528 / IAM 13628 / NBRC 14792 / USDA 110).